We begin with the raw amino-acid sequence, 215 residues long: Adenylate kinase (215 aa).

10 to 15 (GAGKGT) lines the ATP pocket. The interval 30 to 59 (STGDMLRAAIKAQTPMGKMAKEFMDAGKLV) is NMP. AMP contacts are provided by residues threonine 31, arginine 36, 57 to 59 (KLV), 85 to 88 (GFPR), and glutamine 92. Residues 122 to 159 (GRRVHPASGRTYHITYNPPKVDDKDNETGDDLIQREDD) form an LID region. Residues arginine 123 and 132–133 (TY) each bind ATP. Residues arginine 156 and arginine 167 each coordinate AMP. An ATP-binding site is contributed by glutamine 201.

This sequence belongs to the adenylate kinase family. As to quaternary structure, monomer.

It is found in the cytoplasm. The enzyme catalyses AMP + ATP = 2 ADP. It participates in purine metabolism; AMP biosynthesis via salvage pathway; AMP from ADP: step 1/1. Functionally, catalyzes the reversible transfer of the terminal phosphate group between ATP and AMP. Plays an important role in cellular energy homeostasis and in adenine nucleotide metabolism. This chain is Adenylate kinase, found in Hydrogenovibrio crunogenus (strain DSM 25203 / XCL-2) (Thiomicrospira crunogena).